The primary structure comprises 258 residues: Imidazole glycerol phosphate synthase subunit HisF (258 aa).

Active-site residues include Asp-11 and Asp-130.

Belongs to the HisA/HisF family. As to quaternary structure, heterodimer of HisH and HisF.

It localises to the cytoplasm. The enzyme catalyses 5-[(5-phospho-1-deoxy-D-ribulos-1-ylimino)methylamino]-1-(5-phospho-beta-D-ribosyl)imidazole-4-carboxamide + L-glutamine = D-erythro-1-(imidazol-4-yl)glycerol 3-phosphate + 5-amino-1-(5-phospho-beta-D-ribosyl)imidazole-4-carboxamide + L-glutamate + H(+). Its pathway is amino-acid biosynthesis; L-histidine biosynthesis; L-histidine from 5-phospho-alpha-D-ribose 1-diphosphate: step 5/9. Functionally, IGPS catalyzes the conversion of PRFAR and glutamine to IGP, AICAR and glutamate. The HisF subunit catalyzes the cyclization activity that produces IGP and AICAR from PRFAR using the ammonia provided by the HisH subunit. This is Imidazole glycerol phosphate synthase subunit HisF from Escherichia coli O127:H6 (strain E2348/69 / EPEC).